Reading from the N-terminus, the 326-residue chain is D-amino-acid oxidase (326 aa).

FAD is bound by residues G14, V15, I16, D36, S44, A48, A49, I50, and V157. 2 residues coordinate D-proline: Y219 and R274. D-serine-binding residues include Y219 and R274. FAD-binding residues include R274, G299, G300, G302, and T304. G300 provides a ligand contact to D-proline. Residue G300 coordinates D-serine.

Belongs to the DAMOX/DASOX family. As to quaternary structure, homodimer. FAD serves as cofactor.

The protein resides in the cytoplasm. It is found in the secreted. The protein localises to the cell wall. It carries out the reaction a D-alpha-amino acid + O2 + H2O = a 2-oxocarboxylate + H2O2 + NH4(+). The catalysed reaction is D-phenylalanine + O2 + H2O = 3-phenylpyruvate + H2O2 + NH4(+). The enzyme catalyses D-lysine + O2 + H2O = 6-amino-2-oxohexanoate + H2O2 + NH4(+). It catalyses the reaction D-methionine + O2 + H2O = 4-methylsulfanyl-2-oxobutanoate + H2O2 + NH4(+). It carries out the reaction D-arginine + O2 + H2O = 5-guanidino-2-oxopentanoate + H2O2 + NH4(+). The catalysed reaction is D-ornithine + O2 + H2O = 5-amino-2-oxopentanoate + H2O2 + NH4(+). The enzyme catalyses D-leucine + O2 + H2O = 4-methyl-2-oxopentanoate + H2O2 + NH4(+). It catalyses the reaction D-alanine + O2 + H2O = pyruvate + H2O2 + NH4(+). It carries out the reaction D-valine + O2 + H2O = 3-methyl-2-oxobutanoate + H2O2 + NH4(+). The catalysed reaction is D-histidine + O2 + H2O = 3-(imidazol-5-yl)pyruvate + H2O2 + NH4(+). Catalyzes the oxidative deamination of D-amino acids with broad substrate specificity. The protein is D-amino-acid oxidase of Glutamicibacter protophormiae (Brevibacterium protophormiae).